The following is a 25-amino-acid chain: Cysteine-rich venom protein 25 (25 aa).

The tract at residues 1–25 (NVDFNSESTRRKKKQKEIVDLXNSL) is disordered.

Belongs to the CRISP family. Post-translationally, contains 8 disulfide bonds. As to expression, expressed by the venom gland.

It is found in the secreted. This is Cysteine-rich venom protein 25 from Naja haje haje (Egyptian cobra).